Consider the following 270-residue polypeptide: Flavin-dependent thymidylate synthase (270 aa).

The ThyX domain maps to 13-218 (GFVRLVDQMG…PLAWAAFEEH (206 aa)). FAD-binding positions include serine 59, 82-84 (RHR), and glutamate 90. DUMP-binding positions include 79 to 82 (QWFR), 90 to 94 (EISGR), and arginine 157. The short motif at 82–92 (RHRTASVNEIS) is the ThyX motif element. FAD contacts are provided by residues 173–175 (DLH) and histidine 179. Residue arginine 184 coordinates dUMP. The active-site Involved in ionization of N3 of dUMP, leading to its activation is the arginine 184.

Belongs to the thymidylate synthase ThyX family. Homotetramer. FAD is required as a cofactor.

The enzyme catalyses dUMP + (6R)-5,10-methylene-5,6,7,8-tetrahydrofolate + NADPH + H(+) = dTMP + (6S)-5,6,7,8-tetrahydrofolate + NADP(+). The protein operates within pyrimidine metabolism; dTTP biosynthesis. In terms of biological role, catalyzes the reductive methylation of 2'-deoxyuridine-5'-monophosphate (dUMP) to 2'-deoxythymidine-5'-monophosphate (dTMP) while utilizing 5,10-methylenetetrahydrofolate (mTHF) as the methyl donor, and NADPH and FADH(2) as the reductant. The polypeptide is Flavin-dependent thymidylate synthase (Thermus thermophilus (strain ATCC 27634 / DSM 579 / HB8)).